The chain runs to 383 residues: Probable L-tyrosine/L-aspartate decarboxylase (383 aa).

Lys-227 is modified (N6-(pyridoxal phosphate)lysine).

It belongs to the group II decarboxylase family. MfnA subfamily. The cofactor is pyridoxal 5'-phosphate.

It catalyses the reaction L-tyrosine + H(+) = tyramine + CO2. It carries out the reaction L-aspartate + H(+) = beta-alanine + CO2. Its pathway is cofactor biosynthesis; methanofuran biosynthesis. The protein operates within cofactor biosynthesis; coenzyme A biosynthesis. Catalyzes the decarboxylation of L-tyrosine to produce tyramine for methanofuran biosynthesis. Can also catalyze the decarboxylation of L-aspartate to produce beta-alanine for coenzyme A (CoA) biosynthesis. In Methanothrix thermoacetophila (strain DSM 6194 / JCM 14653 / NBRC 101360 / PT) (Methanosaeta thermophila), this protein is Probable L-tyrosine/L-aspartate decarboxylase.